The primary structure comprises 82 residues: Putative antitoxin RelB1 (82 aa).

In terms of biological role, antitoxin component of a type II toxin-antitoxin (TA) system. Its cognate toxin is RelE1 (Potential). This is Putative antitoxin RelB1 (relB1) from Methanocaldococcus jannaschii (strain ATCC 43067 / DSM 2661 / JAL-1 / JCM 10045 / NBRC 100440) (Methanococcus jannaschii).